Here is a 1259-residue protein sequence, read N- to C-terminus: Trafficking protein particle complex II-specific subunit 130 homolog (1259 aa).

Ala2 carries the post-translational modification N-acetylalanine. The tract at residues 479 to 526 is disordered; that stretch reads GNIPEMFDGRPSFTEGSGLEASPRTPSSLKVQAPPMSRTNSSPGNFES.

Belongs to the TMEM1 family. Part of the multisubunit TRAPP (transport protein particle) II complex composed of BET3, BET5, TRS20, TRS23, TRS31, TRS33, TRS65, TRS85, TRS120 and TRS130.

It is found in the golgi apparatus. The protein localises to the trans-Golgi network. The protein resides in the early endosome. Its function is as follows. Specific subunit of the TRAPP II complex, a highly conserved vesicle tethering complex that is required for the proper transport of proteins in post-Golgi trafficking pathways to the growing cell plate in mitotic active cells. Required for the polarized and selective transport of PIN2, but not PIN1, to the plasma membrane. Not required for ER-to-Golgi as well as biosynthetic and endocytic vacuolar transport. In Arabidopsis thaliana (Mouse-ear cress), this protein is Trafficking protein particle complex II-specific subunit 130 homolog.